The primary structure comprises 569 residues: Hexose transporter HXT8 (569 aa).

Residues 1-38 are disordered; sequence MTDRKTNLPEEPIFEEAEDDGCPSIENSSHLSVPTVEE. The Cytoplasmic segment spans residues 1–61; sequence MTDRKTNLPE…EVVVPEKPAS (61 aa). The span at 12–21 shows a compositional bias: acidic residues; it reads PIFEEAEDDG. The chain crosses the membrane as a helical span at residues 62 to 82; it reads AYATVSIMCLCMAFGGFMSGW. Residues 83–118 lie on the Extracellular side of the membrane; that stretch reads DTGTISGFVNQTDFLRRFGNYSHSKNTYYLSNVRTG. N-linked (GlcNAc...) asparagine glycosylation is found at Asn92 and Asn102. Residues 119–139 form a helical membrane-spanning segment; the sequence is LIVSIFNVGSAIGCLFLSKLG. Residues 140–145 are Cytoplasmic-facing; that stretch reads DIYGRC. A helical transmembrane segment spans residues 146–166; sequence MGLIIVIVVYMVGIVIQIASI. Residues 167 to 176 are Extracellular-facing; that stretch reads DKWYQYFIGR. The helical transmembrane segment at 177-197 threads the bilayer; the sequence is IIAGIGAGSISVLAPMLISET. Over 198-203 the chain is Cytoplasmic; it reads APKHIR. A helical membrane pass occupies residues 204–224; sequence GTLLACWQLMVTFAIFLGYCT. Over 225–238 the chain is Extracellular; the sequence is NYGTKTYSNSVQWR. The helical transmembrane segment at 239–259 threads the bilayer; it reads VPLGLCFAWAIIMIGGMTFVP. Topologically, residues 260–342 are cytoplasmic; that stretch reads ESPRFLVQVG…INSLQQLTGD (83 aa). Residues 343 to 359 form a helical membrane-spanning segment; it reads NYFFYYGTTIFKSVGMN. Residues 360–365 are Extracellular-facing; that stretch reads DSFETS. Residues 366 to 383 form a helical membrane-spanning segment; sequence IVLGIVNFASCFFSLYSV. At 384–390 the chain is on the cytoplasmic side; the sequence is DKLGRRR. A helical transmembrane segment spans residues 391 to 411; the sequence is CLLLGAATMTACMVIYASVGV. Residues 412-433 lie on the Extracellular side of the membrane; it reads TRLYPNGKSEPSSKGAGNCTIV. Residue Asn429 is glycosylated (N-linked (GlcNAc...) asparagine). Residues 434-454 form a helical membrane-spanning segment; that stretch reads FTCFYIFCFSCTWGPVCYVII. At 455–471 the chain is on the cytoplasmic side; sequence SETFPLRVRSKCMSVAT. The helical transmembrane segment at 472–492 threads the bilayer; it reads AANLLWGFLIGFFTPFITSAI. Position 493 (Asn493) is a topological domain, extracellular. The chain crosses the membrane as a helical span at residues 494–514; sequence FYYGYVFMGCLAFSYFYVFFF. Topologically, residues 515–569 are cytoplasmic; the sequence is VPETKGLTLEEVDEMWMDGVLPWKSESWVPASRRDGDYDNEKLQHDEKPFYKRMF.

Belongs to the major facilitator superfamily. Sugar transporter (TC 2.A.1.1) family.

It localises to the membrane. In terms of biological role, probable glucose transporter. This Saccharomyces cerevisiae (strain ATCC 204508 / S288c) (Baker's yeast) protein is Hexose transporter HXT8 (HXT8).